We begin with the raw amino-acid sequence, 247 residues long: Segregation and condensation protein A (247 aa).

Belongs to the ScpA family. In terms of assembly, component of a cohesin-like complex composed of ScpA, ScpB and the Smc homodimer, in which ScpA and ScpB bind to the head domain of Smc. The presence of the three proteins is required for the association of the complex with DNA.

Its subcellular location is the cytoplasm. Its function is as follows. Participates in chromosomal partition during cell division. May act via the formation of a condensin-like complex containing Smc and ScpB that pull DNA away from mid-cell into both cell halves. This chain is Segregation and condensation protein A, found in Bacillus cereus (strain 03BB102).